The primary structure comprises 499 residues: Ribose import ATP-binding protein RbsA 1 (499 aa).

ABC transporter domains lie at 5–240 (LEMR…GRSI) and 249–494 (TEPG…TAGS). Residue 37 to 44 (GENGAGKS) participates in ATP binding.

The protein belongs to the ABC transporter superfamily. Ribose importer (TC 3.A.1.2.1) family. In terms of assembly, the complex is composed of an ATP-binding protein (RbsA), two transmembrane proteins (RbsC) and a solute-binding protein (RbsB).

The protein resides in the cell membrane. It catalyses the reaction D-ribose(out) + ATP + H2O = D-ribose(in) + ADP + phosphate + H(+). In terms of biological role, part of the ABC transporter complex RbsABC involved in ribose import. Responsible for energy coupling to the transport system. This Rubrobacter xylanophilus (strain DSM 9941 / JCM 11954 / NBRC 16129 / PRD-1) protein is Ribose import ATP-binding protein RbsA 1.